Reading from the N-terminus, the 255-residue chain is Aspartate/glutamate leucyltransferase (255 aa).

It belongs to the R-transferase family. Bpt subfamily.

The protein resides in the cytoplasm. The catalysed reaction is N-terminal L-glutamyl-[protein] + L-leucyl-tRNA(Leu) = N-terminal L-leucyl-L-glutamyl-[protein] + tRNA(Leu) + H(+). The enzyme catalyses N-terminal L-aspartyl-[protein] + L-leucyl-tRNA(Leu) = N-terminal L-leucyl-L-aspartyl-[protein] + tRNA(Leu) + H(+). In terms of biological role, functions in the N-end rule pathway of protein degradation where it conjugates Leu from its aminoacyl-tRNA to the N-termini of proteins containing an N-terminal aspartate or glutamate. The protein is Aspartate/glutamate leucyltransferase of Leptospira borgpetersenii serovar Hardjo-bovis (strain JB197).